Reading from the N-terminus, the 1040-residue chain is uncharacterized protein (1040 aa).

Residues 403-588 (RLEESSKKGG…YSLIKFLRIK (186 aa)) enclose the Helicase ATP-binding domain. 416–423 (DDMGLGKT) lines the ATP pocket. The segment at 746–798 (CSLCMDVVAELLIIVPCGHFLCRECLTHVITSSEDMAKQTSNENISPKCSVCE) adopts an RING-type zinc-finger fold. The Helicase C-terminal domain occupies 866 to 1032 (KIEKALNAVK…ISRLNTKELS (167 aa)).

The protein belongs to the SNF2/RAD54 helicase family.

It is found in the nucleus. This is an uncharacterized protein from Schizosaccharomyces pombe (strain 972 / ATCC 24843) (Fission yeast).